Reading from the N-terminus, the 550-residue chain is Aldehyde dehydrogenase family 3 member I1, chloroplastic (550 aa).

A chloroplast-targeting transit peptide spans 1–59 (MTKLLEINHIQTLCFAKGFSPARLNVATSPFRISRRGGGGYCSNACIPYRLKFTCYATL). 259–264 (GGARVA) serves as a coordination point for NAD(+). Glu281 serves as the catalytic Proton acceptor. Cys316 serves as the catalytic Nucleophile.

Belongs to the aldehyde dehydrogenase family. Homodimer and homomultimer.

It localises to the plastid. The protein resides in the chloroplast. The catalysed reaction is an aldehyde + NAD(+) + H2O = a carboxylate + NADH + 2 H(+). With respect to regulation, thiol-based regulation. Inactivation after dimerization under oxidizing conditions. Functionally, involved in oxidative stress tolerance by detoxifying reactive aldehydes derived from lipid peroxidation. Medium- to long-chain saturated aldehydes are preferred substrates, while the short-chain aldehyde propanal is a weak substrate. Can use both NAD(+) and NADP(+), but the coenzyme preference is substrate dependent. This Arabidopsis thaliana (Mouse-ear cress) protein is Aldehyde dehydrogenase family 3 member I1, chloroplastic (ALDH3I1).